We begin with the raw amino-acid sequence, 173 residues long: Protein-export protein SecB (173 aa).

Positions 148–173 (QQQKQRREQGTSDSAPSGSPDNGGRQ) are disordered. Positions 158 to 167 (TSDSAPSGSP) are enriched in polar residues.

It belongs to the SecB family. Homotetramer, a dimer of dimers. One homotetramer interacts with 1 SecA dimer.

It localises to the cytoplasm. One of the proteins required for the normal export of preproteins out of the cell cytoplasm. It is a molecular chaperone that binds to a subset of precursor proteins, maintaining them in a translocation-competent state. It also specifically binds to its receptor SecA. The protein is Protein-export protein SecB of Halorhodospira halophila (strain DSM 244 / SL1) (Ectothiorhodospira halophila (strain DSM 244 / SL1)).